Consider the following 552-residue polypeptide: Urocanate hydratase (552 aa).

Residues 49–50 (GG), glutamine 127, 173–175 (GMG), glutamate 193, arginine 198, 239–240 (NA), 260–264 (QTSAH), 270–271 (YV), and tyrosine 319 each bind NAD(+). Residue cysteine 407 is part of the active site. Glycine 489 lines the NAD(+) pocket.

The protein belongs to the urocanase family. In terms of assembly, composed of at least two subunits. NAD(+) is required as a cofactor.

It is found in the cytoplasm. The catalysed reaction is 4-imidazolone-5-propanoate = trans-urocanate + H2O. Its pathway is amino-acid degradation; L-histidine degradation into L-glutamate; N-formimidoyl-L-glutamate from L-histidine: step 2/3. Functionally, catalyzes the conversion of urocanate to 4-imidazolone-5-propionate. This Bacillus subtilis (strain 168) protein is Urocanate hydratase.